Reading from the N-terminus, the 581-residue chain is NADH-quinone oxidoreductase subunit C/D (581 aa).

The tract at residues 1–172 (MSATDLVSEL…PLFNMTAALF (172 aa)) is NADH dehydrogenase I subunit C. An NADH dehydrogenase I subunit D region spans residues 196-581 (ELMILNYGPH…IDYVMSDVDR (386 aa)).

The protein in the N-terminal section; belongs to the complex I 30 kDa subunit family. It in the C-terminal section; belongs to the complex I 49 kDa subunit family. As to quaternary structure, NDH-1 is composed of 13 different subunits. Subunits NuoB, CD, E, F, and G constitute the peripheral sector of the complex.

The protein localises to the cell inner membrane. The catalysed reaction is a quinone + NADH + 5 H(+)(in) = a quinol + NAD(+) + 4 H(+)(out). Functionally, NDH-1 shuttles electrons from NADH, via FMN and iron-sulfur (Fe-S) centers, to quinones in the respiratory chain. The immediate electron acceptor for the enzyme in this species is believed to be ubiquinone. Couples the redox reaction to proton translocation (for every two electrons transferred, four hydrogen ions are translocated across the cytoplasmic membrane), and thus conserves the redox energy in a proton gradient. In Rhodopseudomonas palustris (strain HaA2), this protein is NADH-quinone oxidoreductase subunit C/D.